The primary structure comprises 476 residues: Bifunctional protein HldE (476 aa).

The ribokinase stretch occupies residues 1-318 (MKVTLPDFRR…ENAIRGRAET (318 aa)). 195–198 (NLSE) is an ATP binding site. Residue Asp-264 is part of the active site. A cytidylyltransferase region spans residues 344–476 (MTNGIFDILH…IIQSIKNGRG (133 aa)).

The protein in the N-terminal section; belongs to the carbohydrate kinase PfkB family. It in the C-terminal section; belongs to the cytidylyltransferase family. As to quaternary structure, homodimer.

The enzyme catalyses D-glycero-beta-D-manno-heptose 7-phosphate + ATP = D-glycero-beta-D-manno-heptose 1,7-bisphosphate + ADP + H(+). It catalyses the reaction D-glycero-beta-D-manno-heptose 1-phosphate + ATP + H(+) = ADP-D-glycero-beta-D-manno-heptose + diphosphate. It participates in nucleotide-sugar biosynthesis; ADP-L-glycero-beta-D-manno-heptose biosynthesis; ADP-L-glycero-beta-D-manno-heptose from D-glycero-beta-D-manno-heptose 7-phosphate: step 1/4. Its pathway is nucleotide-sugar biosynthesis; ADP-L-glycero-beta-D-manno-heptose biosynthesis; ADP-L-glycero-beta-D-manno-heptose from D-glycero-beta-D-manno-heptose 7-phosphate: step 3/4. Functionally, catalyzes the phosphorylation of D-glycero-D-manno-heptose 7-phosphate at the C-1 position to selectively form D-glycero-beta-D-manno-heptose-1,7-bisphosphate. Its function is as follows. Catalyzes the ADP transfer from ATP to D-glycero-beta-D-manno-heptose 1-phosphate, yielding ADP-D-glycero-beta-D-manno-heptose. The polypeptide is Bifunctional protein HldE (Yersinia pseudotuberculosis serotype O:1b (strain IP 31758)).